The primary structure comprises 406 residues: Tyrosine--tRNA ligase (406 aa).

Tyrosine 35 serves as a coordination point for L-tyrosine. The 'HIGH' region signature appears at 40 to 49; sequence ATSASLHIGH. Residues tyrosine 167 and glutamine 171 each coordinate L-tyrosine. The 'KMSKS' region motif lies at 227–231; it reads KMGKS. Residue lysine 230 coordinates ATP. The region spanning 341 to 405 is the S4 RNA-binding domain; that stretch reads ILLVDLMVLA…IGKKKILRIV (65 aa).

This sequence belongs to the class-I aminoacyl-tRNA synthetase family. TyrS type 1 subfamily. As to quaternary structure, homodimer.

The protein localises to the cytoplasm. It carries out the reaction tRNA(Tyr) + L-tyrosine + ATP = L-tyrosyl-tRNA(Tyr) + AMP + diphosphate + H(+). Catalyzes the attachment of tyrosine to tRNA(Tyr) in a two-step reaction: tyrosine is first activated by ATP to form Tyr-AMP and then transferred to the acceptor end of tRNA(Tyr). This chain is Tyrosine--tRNA ligase, found in Borrelia duttonii (strain Ly).